The sequence spans 111 residues: MISTVSLFWALCVVCIVNMARYFSSLRALLVVLRGCDPLLYQYVDGGGFFTTHGQPNKQMRLVWYIYAQRYRDHHDEEFIRRCERVRRQFLLTSALCGLVVVSLIALMIWH.

2 helical membrane-spanning segments follow: residues 1-21 (MIST…NMAR) and 90-110 (FLLT…LMIW).

Belongs to the universal stress protein B family.

Its subcellular location is the cell inner membrane. In Salmonella arizonae (strain ATCC BAA-731 / CDC346-86 / RSK2980), this protein is Universal stress protein B.